A 497-amino-acid chain; its full sequence is Probable cytosol aminopeptidase (497 aa).

Positions 263 and 268 each coordinate Mn(2+). Lys-275 is a catalytic residue. Residues Asp-286, Asp-345, and Glu-347 each coordinate Mn(2+). Arg-349 is a catalytic residue.

Belongs to the peptidase M17 family. The cofactor is Mn(2+).

It localises to the cytoplasm. It carries out the reaction Release of an N-terminal amino acid, Xaa-|-Yaa-, in which Xaa is preferably Leu, but may be other amino acids including Pro although not Arg or Lys, and Yaa may be Pro. Amino acid amides and methyl esters are also readily hydrolyzed, but rates on arylamides are exceedingly low.. The enzyme catalyses Release of an N-terminal amino acid, preferentially leucine, but not glutamic or aspartic acids.. In terms of biological role, presumably involved in the processing and regular turnover of intracellular proteins. Catalyzes the removal of unsubstituted N-terminal amino acids from various peptides. The chain is Probable cytosol aminopeptidase from Brucella ovis (strain ATCC 25840 / 63/290 / NCTC 10512).